A 779-amino-acid polypeptide reads, in one-letter code: Phosphoribosylformylglycinamidine synthase subunit PurL (779 aa).

Residue His-52 is part of the active site. 2 residues coordinate ATP: Tyr-55 and Lys-94. Glu-96 contacts Mg(2+). Residues 97–100 (SHNH) and Arg-119 each bind substrate. Residue His-98 is the Proton acceptor of the active site. Position 120 (Asp-120) interacts with Mg(2+). Gln-243 contacts substrate. Asp-271 lines the Mg(2+) pocket. 315–317 (ESQ) contacts substrate. Asn-523 and Gly-560 together coordinate ATP. Asn-561 is a binding site for Mg(2+). Ser-563 provides a ligand contact to substrate.

It belongs to the FGAMS family. Monomer. Part of the FGAM synthase complex composed of 1 PurL, 1 PurQ and 2 PurS subunits.

The protein resides in the cytoplasm. It carries out the reaction N(2)-formyl-N(1)-(5-phospho-beta-D-ribosyl)glycinamide + L-glutamine + ATP + H2O = 2-formamido-N(1)-(5-O-phospho-beta-D-ribosyl)acetamidine + L-glutamate + ADP + phosphate + H(+). The protein operates within purine metabolism; IMP biosynthesis via de novo pathway; 5-amino-1-(5-phospho-D-ribosyl)imidazole from N(2)-formyl-N(1)-(5-phospho-D-ribosyl)glycinamide: step 1/2. Part of the phosphoribosylformylglycinamidine synthase complex involved in the purines biosynthetic pathway. Catalyzes the ATP-dependent conversion of formylglycinamide ribonucleotide (FGAR) and glutamine to yield formylglycinamidine ribonucleotide (FGAM) and glutamate. The FGAM synthase complex is composed of three subunits. PurQ produces an ammonia molecule by converting glutamine to glutamate. PurL transfers the ammonia molecule to FGAR to form FGAM in an ATP-dependent manner. PurS interacts with PurQ and PurL and is thought to assist in the transfer of the ammonia molecule from PurQ to PurL. This Prochlorococcus marinus (strain MIT 9301) protein is Phosphoribosylformylglycinamidine synthase subunit PurL.